The primary structure comprises 42 residues: Photosystem II reaction center protein J (42 aa).

A helical membrane pass occupies residues isoleucine 10–phenylalanine 30.

It belongs to the PsbJ family. In terms of assembly, PSII is composed of 1 copy each of membrane proteins PsbA, PsbB, PsbC, PsbD, PsbE, PsbF, PsbH, PsbI, PsbJ, PsbK, PsbL, PsbM, PsbT, PsbX, PsbY, PsbZ, Psb30/Ycf12, at least 3 peripheral proteins of the oxygen-evolving complex and a large number of cofactors. It forms dimeric complexes.

The protein resides in the plastid. It is found in the chloroplast thylakoid membrane. In terms of biological role, one of the components of the core complex of photosystem II (PSII). PSII is a light-driven water:plastoquinone oxidoreductase that uses light energy to abstract electrons from H(2)O, generating O(2) and a proton gradient subsequently used for ATP formation. It consists of a core antenna complex that captures photons, and an electron transfer chain that converts photonic excitation into a charge separation. The chain is Photosystem II reaction center protein J from Chaetosphaeridium globosum (Charophycean green alga).